We begin with the raw amino-acid sequence, 633 residues long: Phosphomethylpyrimidine synthase (633 aa).

Residues 1–13 are compositionally biased toward polar residues; the sequence is MNIRSNPDTTLPA. The segment at 1–20 is disordered; the sequence is MNIRSNPDTTLPAVTTGPLP. Substrate-binding positions include Asn-221, Met-250, Tyr-279, His-315, 335–337, 376–379, and Glu-415; these read SRG and DGLR. His-419 contacts Zn(2+). Substrate is bound at residue Tyr-442. Residue His-483 coordinates Zn(2+). [4Fe-4S] cluster contacts are provided by Cys-563, Cys-566, and Cys-571.

The protein belongs to the ThiC family. Homodimer. [4Fe-4S] cluster is required as a cofactor.

It catalyses the reaction 5-amino-1-(5-phospho-beta-D-ribosyl)imidazole + S-adenosyl-L-methionine = 4-amino-2-methyl-5-(phosphooxymethyl)pyrimidine + CO + 5'-deoxyadenosine + formate + L-methionine + 3 H(+). Its pathway is cofactor biosynthesis; thiamine diphosphate biosynthesis. Its function is as follows. Catalyzes the synthesis of the hydroxymethylpyrimidine phosphate (HMP-P) moiety of thiamine from aminoimidazole ribotide (AIR) in a radical S-adenosyl-L-methionine (SAM)-dependent reaction. This chain is Phosphomethylpyrimidine synthase, found in Bradyrhizobium sp. (strain ORS 278).